We begin with the raw amino-acid sequence, 166 residues long: Phosphopantetheine adenylyltransferase (166 aa).

Position 9 (Ser-9) interacts with substrate. Residues 9–10 and His-17 each bind ATP; that span reads SF. Positions 41, 74, and 88 each coordinate substrate. ATP is bound by residues 89-91, Glu-99, and 123-129; these read GLR and YVHLSST.

This sequence belongs to the bacterial CoaD family. In terms of assembly, homohexamer. Mg(2+) is required as a cofactor.

It is found in the cytoplasm. The enzyme catalyses (R)-4'-phosphopantetheine + ATP + H(+) = 3'-dephospho-CoA + diphosphate. It participates in cofactor biosynthesis; coenzyme A biosynthesis; CoA from (R)-pantothenate: step 4/5. In terms of biological role, reversibly transfers an adenylyl group from ATP to 4'-phosphopantetheine, yielding dephospho-CoA (dPCoA) and pyrophosphate. The protein is Phosphopantetheine adenylyltransferase of Paenarthrobacter aurescens (strain TC1).